Reading from the N-terminus, the 453-residue chain is MEQGESLRIRVVMGKDRISELPDALLIKILSFLPTKIVVATSVFSKQWRPLWKLVPNLEFDSEDYDDKEQYTFSEIVCKSFLSHKAPVLESFRLEFESEKVDPVDIGLWVGIAFSRHLRELVLVAADTGTGTAFKFPSSLCTCNTLETLRLVLLILVDISSPVVMKSLRTLHLELVSYKDESSIRNLLSGCPILEELLVIRGEDSDIEVFTIDEVPSLKRLTINDDHDGQEFWGYVINAPSLKYLLIEDLRCPGFCLNAPELMEANIFDGTSITNDNFLGYLTSVKRLLLNLSPWKITYPTGSIFYQLVSLEMYTREIDWWDLLTLMLEHSPKLQVLKLTDNCVKFHKNGLPGGKWNEPKYVPECLLSHLETFVWRRFDWGREEEKEIATYILKNARRLNKATFSTNPVNSEELDKLKERRKVHNELDGVVRASNSCQFVFKFDTSYHVSDSS.

An F-box domain is found at 15 to 68; the sequence is KDRISELPDALLIKILSFLPTKIVVATSVFSKQWRPLWKLVPNLEFDSEDYDDK. 6 LRR repeats span residues 89–111, 165–190, 215–239, 247–270, 282–307, and 331–358; these read LESF…LWVG, MKSL…LLSG, VPSL…VINA, IEDL…IFDG, LTSV…IFYQ, and SPKL…KWNE. Positions 355–406 constitute an FBD domain; that stretch reads KWNEPKYVPECLLSHLETFVWRRFDWGREEEKEIATYILKNARRLNKATFST.

The polypeptide is F-box/FBD/LRR-repeat protein At4g00160 (Arabidopsis thaliana (Mouse-ear cress)).